The primary structure comprises 276 residues: uncharacterized protein (276 aa).

The AB hydrolase-1 domain occupies 20–137; the sequence is PVLIFIPGAN…PPINTFLPDS (118 aa).

The protein belongs to the AB hydrolase superfamily.

This is an uncharacterized protein from Staphylococcus aureus (strain MRSA252).